Consider the following 317-residue polypeptide: Putative toluene-4-sulfonate monooxygenase system reductase subunit TsaB2 (317 aa).

One can recognise an FAD-binding FR-type domain in the interval 4 to 106 (DVPVTVAAVR…SAPRNLFEMA (103 aa)). Residue 110–220 (RRVLLLAGGI…PGSVRMERFK (111 aa)) coordinates NAD(+). Residues 232–317 (FELVLQRAGL…CGGGRLVLDI (86 aa)) enclose the 2Fe-2S ferredoxin-type domain. 3 residues coordinate [2Fe-2S] cluster: cysteine 266, cysteine 271, and cysteine 274.

As to quaternary structure, monomer. Part of the p-toluenesulfonate methyl-monooxygenase complex TsaBM, comprising the reductase TsaB and the oxygenase TsaM. The cofactor is FMN.

Functionally, involved in the toluene-4-sulfonate degradation pathway. The chain is Putative toluene-4-sulfonate monooxygenase system reductase subunit TsaB2 (tsaB2) from Comamonas testosteroni (Pseudomonas testosteroni).